We begin with the raw amino-acid sequence, 300 residues long: Porphobilinogen deaminase (300 aa).

The residue at position 239 (cysteine 239) is an S-(dipyrrolylmethanemethyl)cysteine.

This sequence belongs to the HMBS family. Monomer. It depends on dipyrromethane as a cofactor.

The enzyme catalyses 4 porphobilinogen + H2O = hydroxymethylbilane + 4 NH4(+). It participates in porphyrin-containing compound metabolism; protoporphyrin-IX biosynthesis; coproporphyrinogen-III from 5-aminolevulinate: step 2/4. In terms of biological role, tetrapolymerization of the monopyrrole PBG into the hydroxymethylbilane pre-uroporphyrinogen in several discrete steps. The polypeptide is Porphobilinogen deaminase (Francisella philomiragia subsp. philomiragia (strain ATCC 25017 / CCUG 19701 / FSC 153 / O#319-036)).